Reading from the N-terminus, the 1250-residue chain is Cell adhesion molecule-related/down-regulated by oncogenes (1250 aa).

Positions 1–24 (MHPDLGPLWTLLYVLVILCSSVSS) are cleaved as a signal peptide. Residues 25–962 (DLAPYFISEP…SPARSSDMLY (938 aa)) are Extracellular-facing. 5 consecutive Ig-like C2-type domains span residues 28 to 113 (PYFI…ATVS), 119 to 203 (DFDS…LKVE), 224 to 302 (PALS…KHVT), 309 to 395 (EHAS…GRLQ), and 404 to 515 (PVIV…AFLT). An intrachain disulfide couples Cys49 to Cys96. 6 N-linked (GlcNAc...) asparagine glycosylation sites follow: Asn99, Asn179, Asn286, Asn293, Asn341, and Asn426. Cystine bridges form between Cys140-Cys190 and Cys242-Cys289. Disulfide bonds link Cys332–Cys379 and Cys425–Cys499. Positions 524 to 534 (KAESVTPSEAS) are enriched in polar residues. Residues 524–547 (KAESVTPSEASQNDERDPQDGSES) are disordered. N-linked (GlcNAc...) asparagine glycosylation occurs at Asn569. Fibronectin type-III domains lie at 572–673 (VPDA…SKEK), 719–814 (APDR…VAGF), and 822–922 (PITG…TKVK). Asn869 carries N-linked (GlcNAc...) asparagine glycosylation. Positions 929–951 (DYPVKELSTPPSSSGNAGNVGPA) are disordered. Residues 963 to 983 (LIVGCVLGVMVLILMVFIALC) traverse the membrane as a helical segment. Residues 984–1250 (LWKSRQQSTI…SVVLQQAQET (267 aa)) are Cytoplasmic-facing. Disordered stretches follow at residues 1178-1208 (DNIS…AEDK) and 1223-1250 (DCGE…AQET). Over residues 1193 to 1208 (EFSRGDSSGHSEAEDK) the composition is skewed to basic and acidic residues.

In terms of assembly, part of a complex that contains BOC, CDON, NEO1, cadherins and CTNNB1. Interacts with NTN3. Interacts with DHH, IHH and SHH. N-glycosylated. In terms of tissue distribution, highly expressed in somites and the dorsal lips of the neural tube during embryogenesis. Detected at very low levels in adult tissues.

The protein localises to the cell membrane. Component of a cell-surface receptor complex that mediates cell-cell interactions between muscle precursor cells. Promotes differentiation of myogenic cells. Required for response to NTN3 and activation of NFATC3. This chain is Cell adhesion molecule-related/down-regulated by oncogenes (Cdon), found in Mus musculus (Mouse).